Here is a 453-residue protein sequence, read N- to C-terminus: Allantoinase (453 aa).

Residues H59, H61, K146, H186, H242, and D315 each contribute to the Zn(2+) site. K146 bears the N6-carboxylysine mark.

It belongs to the metallo-dependent hydrolases superfamily. Allantoinase family. In terms of assembly, homotetramer. The cofactor is Zn(2+). In terms of processing, carboxylation allows a single lysine to coordinate two zinc ions.

The catalysed reaction is (S)-allantoin + H2O = allantoate + H(+). Its pathway is nitrogen metabolism; (S)-allantoin degradation; allantoate from (S)-allantoin: step 1/1. In terms of biological role, catalyzes the conversion of allantoin (5-ureidohydantoin) to allantoic acid by hydrolytic cleavage of the five-member hydantoin ring. The chain is Allantoinase from Salmonella paratyphi B (strain ATCC BAA-1250 / SPB7).